Reading from the N-terminus, the 322-residue chain is Acetyl-coenzyme A carboxylase carboxyl transferase subunit beta (322 aa).

Residues 24 to 293 (LWIKCPDTGQ…PAVEEIAASD (270 aa)) enclose the CoA carboxyltransferase N-terminal domain.

This sequence belongs to the AccD/PCCB family. In terms of assembly, acetyl-CoA carboxylase is a heterohexamer composed of biotin carboxyl carrier protein (AccB), biotin carboxylase (AccC) and two subunits each of ACCase subunit alpha (AccA) and ACCase subunit beta (AccD).

Its subcellular location is the cytoplasm. The catalysed reaction is N(6)-carboxybiotinyl-L-lysyl-[protein] + acetyl-CoA = N(6)-biotinyl-L-lysyl-[protein] + malonyl-CoA. It participates in lipid metabolism; malonyl-CoA biosynthesis; malonyl-CoA from acetyl-CoA: step 1/1. Component of the acetyl coenzyme A carboxylase (ACC) complex. Biotin carboxylase (BC) catalyzes the carboxylation of biotin on its carrier protein (BCCP) and then the CO(2) group is transferred by the transcarboxylase to acetyl-CoA to form malonyl-CoA. The polypeptide is Acetyl-coenzyme A carboxylase carboxyl transferase subunit beta (Rhodopseudomonas palustris (strain BisB5)).